The sequence spans 456 residues: FAD-dependent monooxygenase sor5 (456 aa).

The helical transmembrane segment at 18-38 (PLEVAIVGGGLTGLALALGLL) threads the bilayer. A glycan (N-linked (GlcNAc...) asparagine) is linked at N43. 2 residues coordinate FAD: E48 and R119. The active site involves R200. Residues D331 and A344 each contribute to the FAD site.

It belongs to the paxM FAD-dependent monooxygenase family. The cofactor is FAD.

The protein resides in the membrane. It functions in the pathway secondary metabolite biosynthesis. In terms of biological role, FAD-dependent monooxygenase; part of the SOR gene cluster that mediates the biosynthesis of sorbicillinoids, a diverse group of yellow secondary metabolites that restrict growth of competing pathogenic fungi but not of bacteria. Sorbicillinoids biosynthesis requires the action of two PKSs. The SOR cluster is required for the production of trichodimerol and dihydrotrichotetronin, with sor2 being sufficient for production of trichodimerol, but not dihydrotrichotetronin in the light. Sor1 iteratively combines three acetyl units and the growing chain is modified by the ketoacyl reductase subunit, and optional by the enoyl reductase subunit in the second cycle. The polyketide is then handed over to the PKS sor2, which adds three more acetyl units, and two methyl groups. Sor2 releases an aldehyde, which undergoes spontaneous cyclization resulting in the formation of sorbicillin or 2',3'-dihydrosorbicillin. The monooxygenase sor5 oxidizes sorbicillin and 2',3'-dihydrosorbicillin to 2',3'-dihydrosorbicillinol and sorbicillinol, respectively. The oxidoreductase sor8 further converts sorbicillinol into oxosorbicillinol. Sorbicillinol is the building block for the other sorbicillinoids such as disorbicillinol, bisvertinolon, dihydrobisvertinolone, and dihydrotrichotetronine. The polypeptide is FAD-dependent monooxygenase sor5 (Hypocrea jecorina (strain QM6a) (Trichoderma reesei)).